An 837-amino-acid chain; its full sequence is Striatin-interacting protein 1 (837 aa).

M1 carries the post-translational modification N-acetylmethionine. Residues 1-67 (MEPAAGTPGP…DSEGYSESPD (67 aa)) form a disordered region. The span at 18–35 (PQPPPPPPPATAQPPPGA) shows a compositional bias: pro residues. Residues 47–60 (KAREFNRNQRKDSE) show a composition bias toward basic and acidic residues. Residues S59, S335, and S339 each carry the phosphoserine modification. The disordered stretch occupies residues 336–423 (PPASASDLIE…DRLTCPKGLP (88 aa)). Basic and acidic residues predominate over residues 356-377 (KALIKQDNLDAFNERDPYKADD). Residues 378–391 (SREEEEENDDDNSL) are compositionally biased toward acidic residues. S788 is modified (phosphoserine). The segment at 796–837 (DNCLQSVLGQRVDLPEDFQMNYDLWLEREVFSKPISWEELLQ) is required for STRIPAK core complex formation.

Belongs to the STRIP family. As to quaternary structure, part of the core of STRIPAK complexes composed of PP2A catalytic and scaffolding subunits, the striatins (PP2A regulatory subunits), the striatin-associated proteins MOB4, STRIP1 and STRIP2, PDCD10 and members of the STE20 kinases, such as STK24 and STK26. The STRIPAK complex can be extended by adapter proteins such as SLMAP:SIKE1, CTTNBP2 or CTTNBP2NL. Interacts with CDC42BPB. Interacts with CTTNBP2NL.

It localises to the cytoplasm. Functionally, plays a role in the regulation of cell morphology and cytoskeletal organization. Required in the cortical actin filament dynamics and cell shape. Part of the striatin-interacting phosphatase and kinase (STRIPAK) complexes. STRIPAK complexes have critical roles in protein (de)phosphorylation and are regulators of multiple signaling pathways including Hippo, MAPK, nuclear receptor and cytoskeleton remodeling. Different types of STRIPAK complexes are involved in a variety of biological processes such as cell growth, differentiation, apoptosis, metabolism and immune regulation. In Bos taurus (Bovine), this protein is Striatin-interacting protein 1 (STRIP1).